Reading from the N-terminus, the 101-residue chain is Apolipoprotein C-III (101 aa).

The first 20 residues, 1 to 20 (MQPRMLLIVALVALLASARA), serve as a signal peptide directing secretion. Methionine 64 carries the post-translational modification Methionine sulfoxide. The lipid-binding stretch occupies residues 69 to 101 (KSLKGYWSKFTDKFTGLWESGPEDQLTTPTLEP). The O-linked (GalNAc...) threonine glycan is linked to threonine 96.

It belongs to the apolipoprotein C3 family. The most abundant glycoforms are characterized by an O-linked disaccharide galactose linked to N-acetylgalactosamine (Gal-GalNAc), further modified with up to 3 sialic acid residues. Less abundant glycoforms are characterized by more complex and fucosylated glycan moieties. O-glycosylated on Thr-96 with a core 1 or possibly core 8 glycan. In terms of tissue distribution, synthesized predominantly in liver and to a lesser degree in intestine.

It is found in the secreted. Component of triglyceride-rich very low density lipoproteins (VLDL) and high density lipoproteins (HDL) in plasma. Plays a multifaceted role in triglyceride homeostasis. Intracellularly, promotes hepatic very low density lipoprotein 1 (VLDL1) assembly and secretion; extracellularly, attenuates hydrolysis and clearance of triglyceride-rich lipoproteins (TRLs). Impairs the lipolysis of TRLs by inhibiting lipoprotein lipase and the hepatic uptake of TRLs by remnant receptors. Formed of several curved helices connected via semiflexible hinges, so that it can wrap tightly around the curved micelle surface and easily adapt to the different diameters of its natural binding partners. In Rattus norvegicus (Rat), this protein is Apolipoprotein C-III (Apoc3).